The following is a 236-amino-acid chain: Exosome complex component Rrp4 (236 aa).

The S1 motif domain occupies 64 to 133 (GDKVIGKVIE…EIKESWLTLK (70 aa)). A KH domain is found at 141-199 (EGGHMVLIHASRVPRVIGKGGGMVNMVKELTATRIIIGQNGLIWIDGPIEGVTMAIAAI).

It belongs to the RRP4 family. In terms of assembly, component of the archaeal exosome complex. Forms a trimer of Rrp4 and/or Csl4 subunits. The trimer associates with a hexameric ring-like arrangement composed of 3 Rrp41-Rrp42 heterodimers.

It is found in the cytoplasm. Functionally, non-catalytic component of the exosome, which is a complex involved in RNA degradation. Increases the RNA binding and the efficiency of RNA degradation. Confers strong poly(A) specificity to the exosome. The protein is Exosome complex component Rrp4 of Thermoplasma acidophilum (strain ATCC 25905 / DSM 1728 / JCM 9062 / NBRC 15155 / AMRC-C165).